A 390-amino-acid polypeptide reads, in one-letter code: MNIHEYQAKEIFRKYGVPTPRGGVAFTGPEARRVAEELGGNLWVVKAQIHAGGRGKAGGVKLAKSLDEVEKIAEEMLGMTLVTHQTGPEGKVVKKVYIEEGADIKDELYLGMVLDRALEMPVMMASTEGGMEIEEVAEKTPEKIIKVAIDPAIGFQPFHARKLAFGLGLPKDEQREFIKFASALYNVYMDNDAEMIEINPLIKTGDGKFLALDAKMGFDDNALYKHPEIAEMRDLDEEEPTEVEAKKYGLSYIKLDGNVGCMVNGAGLAMATMDIIKHEGGEPANFLDVGGGANPDTVAKGFEIILSDPNVKSIFVNIFGGIVRCDRIANGILQATEKVEVNVPVIVRLDGTNAEEAAEILRNANIKNIIPAENLKDGAKKAVAAAKGEL.

The region spanning 9 to 244 is the ATP-grasp domain; sequence KEIFRKYGVP…LDEEEPTEVE (236 aa). Residues Lys-46, 53–55, Glu-99, Ala-102, and Glu-107 contribute to the ATP site; that span reads GRG. 2 residues coordinate Mg(2+): Asn-199 and Asp-213. Substrate contacts are provided by residues Asn-264 and 321–323; that span reads GIV.

The protein belongs to the succinate/malate CoA ligase beta subunit family. Heterotetramer of two alpha and two beta subunits. The cofactor is Mg(2+).

It catalyses the reaction succinate + ATP + CoA = succinyl-CoA + ADP + phosphate. It carries out the reaction GTP + succinate + CoA = succinyl-CoA + GDP + phosphate. The protein operates within carbohydrate metabolism; tricarboxylic acid cycle; succinate from succinyl-CoA (ligase route): step 1/1. Succinyl-CoA synthetase functions in the citric acid cycle (TCA), coupling the hydrolysis of succinyl-CoA to the synthesis of either ATP or GTP and thus represents the only step of substrate-level phosphorylation in the TCA. The beta subunit provides nucleotide specificity of the enzyme and binds the substrate succinate, while the binding sites for coenzyme A and phosphate are found in the alpha subunit. The sequence is that of Succinate--CoA ligase [ADP-forming] subunit beta from Nautilia profundicola (strain ATCC BAA-1463 / DSM 18972 / AmH).